A 669-amino-acid polypeptide reads, in one-letter code: Matrix metalloproteinase-15 (669 aa).

Residues 1–41 constitute a signal peptide (or 45); it reads MGSDPSAPGRPGWTGSLLGDREEAARPRLLPLLLVLLGCLG. The propeptide occupies 42–131; the sequence is LGVAAEDAEV…KANLRRRRKR (90 aa). The Cysteine switch signature appears at 109–116; that stretch reads PRCGVPDQ. Cys111 is a binding site for Zn(2+). Residues 132–625 lie on the Extracellular side of the membrane; the sequence is YALTGRKWNN…QMEEVARTVN (494 aa). The N-linked (GlcNAc...) asparagine glycan is linked to Asn150. His259 provides a ligand contact to Zn(2+). Glu260 is a catalytic residue. Zn(2+) contacts are provided by His263 and His269. The tract at residues 300–370 is disordered; the sequence is QQLYGTPDGQ…RPDQYGPNIC (71 aa). The segment covering 305–322 has biased composition (low complexity); the sequence is TPDGQPQPTQPLPTVTPR. A compositionally biased stretch (pro residues) spans 333–342; it reads RPPQPPPPGG. Hemopexin repeat units lie at residues 367 to 415, 416 to 461, 463 to 511, and 512 to 559; these read PNIC…WRGL, PGDI…GLGI, YDRI…QGIP, and ASPK…FMGC. Cys370 and Cys559 are joined by a disulfide. The disordered stretch occupies residues 574 to 593; sequence RPPFNPHGGAEPGADSAEGD. Ser589 is subject to Phosphoserine. Residues 626–646 form a helical membrane-spanning segment; that stretch reads VVMVLVPLLLLLCVLGLTYAL. Over 647-669 the chain is Cytoplasmic; sequence VQMQRKGAPRVLLYCKRSLQEWV.

It belongs to the peptidase M10A family. Requires Zn(2+) as cofactor. Ca(2+) serves as cofactor. In terms of processing, the precursor is cleaved by a furin endopeptidase. As to expression, appeared to be synthesized preferentially in liver, placenta, testis, colon and intestine. Substantial amounts are also detected in pancreas, kidney, lung, heart and skeletal muscle.

Its subcellular location is the membrane. Endopeptidase that degrades various components of the extracellular matrix. May activate progelatinase A. The sequence is that of Matrix metalloproteinase-15 (MMP15) from Homo sapiens (Human).